The primary structure comprises 266 residues: Undecaprenyl-diphosphatase (266 aa).

The next 8 helical transmembrane spans lie at isoleucine 4–serine 24, leucine 39–tyrosine 59, leucine 86–isoleucine 106, methionine 112–leucine 132, isoleucine 145–serine 165, lysine 182–leucine 202, isoleucine 210–glycine 230, and leucine 246–isoleucine 266.

Belongs to the UppP family.

It localises to the cell inner membrane. It carries out the reaction di-trans,octa-cis-undecaprenyl diphosphate + H2O = di-trans,octa-cis-undecaprenyl phosphate + phosphate + H(+). In terms of biological role, catalyzes the dephosphorylation of undecaprenyl diphosphate (UPP). Confers resistance to bacitracin. In Borreliella burgdorferi (strain ATCC 35210 / DSM 4680 / CIP 102532 / B31) (Borrelia burgdorferi), this protein is Undecaprenyl-diphosphatase.